Here is a 198-residue protein sequence, read N- to C-terminus: MRGRPSLLLVYMGLATCLDTSPHREQNQVLDIFLDAPEAQSFLVGRRRFPRANHWDLELLTPGNLERECLEERCSWEEAREYFEDNTLTERFWESYTYNGKGGRGRVDVAGLAVGLTSGILLIVLAGLGAFWYLHYRRRRLRGQESCLQETGLIIPLSPQTPQSPPLPPGLPTYEQALAASGVHDAPPPPYSSLRRPH.

The signal sequence occupies residues 1–17 (MRGRPSLLLVYMGLATC). Residues 18–51 (LDTSPHREQNQVLDIFLDAPEAQSFLVGRRRFPR) constitute a propeptide that is removed on maturation. Positions 52-98 (ANHWDLELLTPGNLERECLEERCSWEEAREYFEDNTLTERFWESYTY) constitute a Gla domain. The Extracellular portion of the chain corresponds to 52 to 111 (ANHWDLELLTPGNLERECLEERCSWEEAREYFEDNTLTERFWESYTYNGKGGRGRVDVAG). C69 and C74 are disulfide-bonded. E72 is subject to 4-carboxyglutamate. The helical transmembrane segment at 112-132 (LAVGLTSGILLIVLAGLGAFW) threads the bilayer. Over 133–198 (YLHYRRRRLR…PPYSSLRRPH (66 aa)) the chain is Cytoplasmic. The disordered stretch occupies residues 156-198 (PLSPQTPQSPPLPPGLPTYEQALAASGVHDAPPPPYSSLRRPH). The segment covering 162–171 (PQSPPLPPGL) has biased composition (pro residues). The LPXY motif; mediates binding to WW domain-containing proteins motif lies at 171–174 (LPTY). Residues 188–191 (PPPY) carry the PPXY motif; mediates binding to WW domain-containing proteins motif.

In terms of assembly, interacts with NEDD4. Interacts with transcriptional coactivator YAP1. Post-translationally, gamma-carboxyglutamate residues are formed by vitamin K dependent carboxylation. These residues are essential for the binding of calcium.

The protein localises to the cell membrane. The sequence is that of Transmembrane gamma-carboxyglutamic acid protein 2 (Prrg2) from Mus musculus (Mouse).